The sequence spans 108 residues: Nucleoid-associated protein Bphyt_1827 (108 aa).

A disordered region spans residues 87 to 108 (AQEKMGGMTSGLPLPPGFKLPF). The segment covering 99-108 (PLPPGFKLPF) has biased composition (pro residues).

Belongs to the YbaB/EbfC family. As to quaternary structure, homodimer.

Its subcellular location is the cytoplasm. It is found in the nucleoid. Binds to DNA and alters its conformation. May be involved in regulation of gene expression, nucleoid organization and DNA protection. This chain is Nucleoid-associated protein Bphyt_1827, found in Paraburkholderia phytofirmans (strain DSM 17436 / LMG 22146 / PsJN) (Burkholderia phytofirmans).